The sequence spans 213 residues: Large ribosomal subunit protein uL1 (213 aa).

The protein belongs to the universal ribosomal protein uL1 family. In terms of assembly, part of the 50S ribosomal subunit.

Functionally, binds directly to 23S rRNA. Probably involved in E site tRNA release. In terms of biological role, protein L1 is also a translational repressor protein, it controls the translation of its operon by binding to its mRNA. This is Large ribosomal subunit protein uL1 from Methanococcoides burtonii (strain DSM 6242 / NBRC 107633 / OCM 468 / ACE-M).